The primary structure comprises 131 residues: Large ribosomal subunit protein bL17 (131 aa).

This sequence belongs to the bacterial ribosomal protein bL17 family. As to quaternary structure, part of the 50S ribosomal subunit. Contacts protein L32.

The protein is Large ribosomal subunit protein bL17 of Janthinobacterium sp. (strain Marseille) (Minibacterium massiliensis).